The following is a 128-amino-acid chain: Fluoride-specific ion channel FluC 2 (128 aa).

Transmembrane regions (helical) follow at residues 13 to 35 (ALVA…AIAG), 40 to 59 (LAAN…EAAA), 71 to 93 (LLGT…TAGL), and 97 to 119 (WMAA…GRAI).

This sequence belongs to the fluoride channel Fluc/FEX (TC 1.A.43) family.

Its subcellular location is the cell membrane. It carries out the reaction fluoride(in) = fluoride(out). Its function is as follows. Fluoride-specific ion channel. Important for reducing fluoride concentration in the cell, thus reducing its toxicity. The polypeptide is Fluoride-specific ion channel FluC 2 (Halobacterium salinarum (strain ATCC 700922 / JCM 11081 / NRC-1) (Halobacterium halobium)).